Consider the following 482-residue polypeptide: tRNA sulfurtransferase (482 aa).

The THUMP domain occupies 61-165 (LAIRDALTRI…DDRLLLIKGR (105 aa)). ATP-binding positions include 183–184 (LI), Lys-265, Gly-287, and Gln-296. Cys-344 and Cys-456 are oxidised to a cystine. The Rhodanese domain occupies 404–482 (FGPNDVILDI…GFQNVKVYRP (79 aa)). The active-site Cysteine persulfide intermediate is Cys-456.

This sequence belongs to the ThiI family.

The protein localises to the cytoplasm. The catalysed reaction is [ThiI sulfur-carrier protein]-S-sulfanyl-L-cysteine + a uridine in tRNA + 2 reduced [2Fe-2S]-[ferredoxin] + ATP + H(+) = [ThiI sulfur-carrier protein]-L-cysteine + a 4-thiouridine in tRNA + 2 oxidized [2Fe-2S]-[ferredoxin] + AMP + diphosphate. It carries out the reaction [ThiS sulfur-carrier protein]-C-terminal Gly-Gly-AMP + S-sulfanyl-L-cysteinyl-[cysteine desulfurase] + AH2 = [ThiS sulfur-carrier protein]-C-terminal-Gly-aminoethanethioate + L-cysteinyl-[cysteine desulfurase] + A + AMP + 2 H(+). Its pathway is cofactor biosynthesis; thiamine diphosphate biosynthesis. Catalyzes the ATP-dependent transfer of a sulfur to tRNA to produce 4-thiouridine in position 8 of tRNAs, which functions as a near-UV photosensor. Also catalyzes the transfer of sulfur to the sulfur carrier protein ThiS, forming ThiS-thiocarboxylate. This is a step in the synthesis of thiazole, in the thiamine biosynthesis pathway. The sulfur is donated as persulfide by IscS. This Citrobacter koseri (strain ATCC BAA-895 / CDC 4225-83 / SGSC4696) protein is tRNA sulfurtransferase.